Consider the following 307-residue polypeptide: Methionyl-tRNA formyltransferase (307 aa).

108–111 (SLLP) contributes to the (6S)-5,6,7,8-tetrahydrofolate binding site.

The protein belongs to the Fmt family.

The enzyme catalyses L-methionyl-tRNA(fMet) + (6R)-10-formyltetrahydrofolate = N-formyl-L-methionyl-tRNA(fMet) + (6S)-5,6,7,8-tetrahydrofolate + H(+). Its function is as follows. Attaches a formyl group to the free amino group of methionyl-tRNA(fMet). The formyl group appears to play a dual role in the initiator identity of N-formylmethionyl-tRNA by promoting its recognition by IF2 and preventing the misappropriation of this tRNA by the elongation apparatus. The protein is Methionyl-tRNA formyltransferase of Xylella fastidiosa (strain M23).